We begin with the raw amino-acid sequence, 223 residues long: Deoxyribose-phosphate aldolase (223 aa).

The active-site Proton donor/acceptor is the aspartate 89. Lysine 154 (schiff-base intermediate with acetaldehyde) is an active-site residue. Lysine 183 functions as the Proton donor/acceptor in the catalytic mechanism.

Belongs to the DeoC/FbaB aldolase family. DeoC type 1 subfamily.

The protein resides in the cytoplasm. It carries out the reaction 2-deoxy-D-ribose 5-phosphate = D-glyceraldehyde 3-phosphate + acetaldehyde. Its pathway is carbohydrate degradation; 2-deoxy-D-ribose 1-phosphate degradation; D-glyceraldehyde 3-phosphate and acetaldehyde from 2-deoxy-alpha-D-ribose 1-phosphate: step 2/2. Its function is as follows. Catalyzes a reversible aldol reaction between acetaldehyde and D-glyceraldehyde 3-phosphate to generate 2-deoxy-D-ribose 5-phosphate. The sequence is that of Deoxyribose-phosphate aldolase from Thermoanaerobacter sp. (strain X514).